The following is a 157-amino-acid chain: Transcriptional repressor NrdR (157 aa).

A zinc finger spans residues 3–34; that stretch reads CPFCSATDTKVIDSRLVADGHQVRRRRECLLC. The ATP-cone domain occupies 49–139; the sequence is PRVVKQDGSR…VYRAFEDVSE (91 aa).

It belongs to the NrdR family. Requires Zn(2+) as cofactor.

Functionally, negatively regulates transcription of bacterial ribonucleotide reductase nrd genes and operons by binding to NrdR-boxes. The polypeptide is Transcriptional repressor NrdR (Shewanella loihica (strain ATCC BAA-1088 / PV-4)).